We begin with the raw amino-acid sequence, 207 residues long: Large ribosomal subunit protein uL4 (207 aa).

Residues 48–70 form a disordered region; it reads KAQKTRSEVSGGGAKPWRQKGTG.

The protein belongs to the universal ribosomal protein uL4 family. Part of the 50S ribosomal subunit.

In terms of biological role, one of the primary rRNA binding proteins, this protein initially binds near the 5'-end of the 23S rRNA. It is important during the early stages of 50S assembly. It makes multiple contacts with different domains of the 23S rRNA in the assembled 50S subunit and ribosome. Functionally, forms part of the polypeptide exit tunnel. The protein is Large ribosomal subunit protein uL4 of Francisella tularensis subsp. holarctica (strain FTNF002-00 / FTA).